A 184-amino-acid chain; its full sequence is Peptide deformylase (184 aa).

Fe cation contacts are provided by cysteine 111 and histidine 154. Residue glutamate 155 is part of the active site. Residue histidine 158 participates in Fe cation binding.

The protein belongs to the polypeptide deformylase family. Fe(2+) serves as cofactor.

The enzyme catalyses N-terminal N-formyl-L-methionyl-[peptide] + H2O = N-terminal L-methionyl-[peptide] + formate. Its function is as follows. Removes the formyl group from the N-terminal Met of newly synthesized proteins. Requires at least a dipeptide for an efficient rate of reaction. N-terminal L-methionine is a prerequisite for activity but the enzyme has broad specificity at other positions. This is Peptide deformylase from Lactobacillus gasseri (strain ATCC 33323 / DSM 20243 / BCRC 14619 / CIP 102991 / JCM 1131 / KCTC 3163 / NCIMB 11718 / NCTC 13722 / AM63).